A 540-amino-acid polypeptide reads, in one-letter code: T-complex protein 1 subunit theta (540 aa).

The protein belongs to the TCP-1 chaperonin family. Heterooligomeric complex of about 850 to 900 kDa that forms two stacked rings, 12 to 16 nm in diameter.

Its subcellular location is the cytoplasm. Functionally, molecular chaperone; assists the folding of proteins upon ATP hydrolysis. Known to play a role, in vitro, in the folding of actin and tubulin. In yeast may play a role in mitotic spindle formation. The chain is T-complex protein 1 subunit theta (CCT8) from Candida albicans (Yeast).